Consider the following 728-residue polypeptide: Probable ubiquitin-conjugating enzyme protein 17 (728 aa).

Positions 1-17 (MSSQASQRSSSTSAVAQ) are enriched in low complexity. Disordered regions lie at residues 1–23 (MSSQASQRSSSTSAVAQKTRERR) and 123–155 (SSRSADEQKRRARRNSSASLSHKGTGYGTGSTR). The 167-residue stretch at 402–568 (DRTKRIAKEL…IEHATLNYAI (167 aa)) folds into the UBC core domain. Catalysis depends on C495, which acts as the Glycyl thioester intermediate. 2 disordered regions span residues 649 to 678 (PFAKEEAEESERLKREQSEKEEKQKKEAAA) and 709 to 728 (RTQPTGDYSVPSVNEPSTSS). The segment covering 658 to 678 (SERLKREQSEKEEKQKKEAAA) has biased composition (basic and acidic residues). The span at 710–728 (TQPTGDYSVPSVNEPSTSS) shows a compositional bias: polar residues.

It belongs to the ubiquitin-conjugating enzyme family.

This Caenorhabditis elegans protein is Probable ubiquitin-conjugating enzyme protein 17 (ubc-17).